The sequence spans 67 residues: Large ribosomal subunit protein bL32 (67 aa).

Over residues 1–19 the composition is skewed to basic residues; that stretch reads MAVPKRKMSRSNTRARRSQ. Positions 1–21 are disordered; that stretch reads MAVPKRKMSRSNTRARRSQWK.

This sequence belongs to the bacterial ribosomal protein bL32 family.

This chain is Large ribosomal subunit protein bL32, found in Arthrobacter sp. (strain FB24).